Consider the following 136-residue polypeptide: Alpha-2-purothionin (136 aa).

The first 27 residues, 1–27, serve as a signal peptide directing secretion; the sequence is MGSKGLKGVMVCLLILGLVLEQVQVEG. Cystine bridges form between C30/C66, C31/C58, C39/C56, and C43/C52. The propeptide at 73 to 136 is acidic domain; sequence LALESNSDEP…GDAGLTSLDA (64 aa).

The protein belongs to the plant thionin (TC 1.C.44) family. 4 C-C subfamily.

It localises to the secreted. Functionally, thionins are small plant proteins which are toxic to animal cells. They seem to exert their toxic effect at the level of the cell membrane. Their precise function is not known. The sequence is that of Alpha-2-purothionin (THI1.2) from Triticum aestivum (Wheat).